Reading from the N-terminus, the 782-residue chain is Coiled-coil alpha-helical rod protein 1 (782 aa).

Composition is skewed to basic and acidic residues over residues 62 to 74 (ERDVSSDRQEPGR) and 208 to 218 (ETRRAGEAKEL). 2 disordered regions span residues 62–82 (ERDVSSDRQEPGRRGRSWGLE) and 182–218 (LTQAHEEALSSLTSKAEGLEKSLSSLETRRAGEAKEL). 3 coiled-coil regions span residues 82–314 (EGSQ…ELTR), 344–437 (LMVQ…NAVS), and 498–691 (VADV…QQEG).

Its subcellular location is the cytoplasm. It localises to the nucleus. In terms of biological role, may be a regulator of keratinocyte proliferation or differentiation. The chain is Coiled-coil alpha-helical rod protein 1 (CCHCR1) from Pan paniscus (Pygmy chimpanzee).